Consider the following 179-residue polypeptide: Large ribosomal subunit protein uL6 (179 aa).

This sequence belongs to the universal ribosomal protein uL6 family. As to quaternary structure, part of the 50S ribosomal subunit.

Its function is as follows. This protein binds to the 23S rRNA, and is important in its secondary structure. It is located near the subunit interface in the base of the L7/L12 stalk, and near the tRNA binding site of the peptidyltransferase center. The chain is Large ribosomal subunit protein uL6 from Spiroplasma kunkelii.